Consider the following 341-residue polypeptide: Glycerol-3-phosphate dehydrogenase [NAD(P)+] (341 aa).

4 residues coordinate NADPH: S11, W12, R32, and K106. Positions 106, 137, and 139 each coordinate sn-glycerol 3-phosphate. A141 contributes to the NADPH binding site. Positions 192, 245, 255, 256, and 257 each coordinate sn-glycerol 3-phosphate. K192 serves as the catalytic Proton acceptor. NADPH is bound at residue R256. Positions 280 and 282 each coordinate NADPH.

The protein belongs to the NAD-dependent glycerol-3-phosphate dehydrogenase family.

The protein localises to the cytoplasm. It catalyses the reaction sn-glycerol 3-phosphate + NAD(+) = dihydroxyacetone phosphate + NADH + H(+). The enzyme catalyses sn-glycerol 3-phosphate + NADP(+) = dihydroxyacetone phosphate + NADPH + H(+). It participates in membrane lipid metabolism; glycerophospholipid metabolism. Functionally, catalyzes the reduction of the glycolytic intermediate dihydroxyacetone phosphate (DHAP) to sn-glycerol 3-phosphate (G3P), the key precursor for phospholipid synthesis. The sequence is that of Glycerol-3-phosphate dehydrogenase [NAD(P)+] from Exiguobacterium sp. (strain ATCC BAA-1283 / AT1b).